Consider the following 141-residue polypeptide: NTDQSFPGFVGSEMWNPNTELSEDCLYLNVWIPAPKPKNATVMIWIYGGGFQTGTSSLHVYDGKFLSRVERVIVVSMNYRVGALGFLALPGNPEAPGNMGLFDQQLALQWVQKNIAAFGGNPKSVTLFGESAGAVSVSLHL.

N-linked (GlcNAc...) asparagine glycosylation is present at Asn39. Gly49 to Gly50 lines the substrate pocket. Ser131 functions as the Acyl-ester intermediate in the catalytic mechanism. Ser131 bears the Phosphoserine mark.

This sequence belongs to the type-B carboxylesterase/lipase family. Homotetramer; disulfide-linked. Dimer of dimers. Present in most cells except erythrocytes.

It localises to the secreted. The catalysed reaction is an acylcholine + H2O = a carboxylate + choline + H(+). Esterase with broad substrate specificity. Contributes to the inactivation of the neurotransmitter acetylcholine. Can degrade neurotoxic organophosphate esters. The polypeptide is Cholinesterase (BCHE) (Sus scrofa (Pig)).